The sequence spans 1381 residues: Hepatocyte growth factor receptor (1381 aa).

An N-terminal signal peptide occupies residues 1-24 (MKAPTVLTPGILVLLFILVQRSNG). Topologically, residues 25–932 (ECKEALTKSE…VIVQPDQNFT (908 aa)) are extracellular. The region spanning 27 to 515 (KEALTKSEMN…TGKKITKIPL (489 aa)) is the Sema domain. Asparagine 45 carries an N-linked (GlcNAc...) asparagine glycan. 4 disulfide bridges follow: cysteine 95–cysteine 101, cysteine 98–cysteine 160, cysteine 133–cysteine 141, and cysteine 172–cysteine 175. Asparagine 106 carries N-linked (GlcNAc...) asparagine glycosylation. A glycan (N-linked (GlcNAc...) asparagine) is linked at asparagine 149. A glycan (N-linked (GlcNAc...) asparagine) is linked at asparagine 202. Disulfide bonds link cysteine 298–cysteine 363 and cysteine 385–cysteine 397. An N-linked (GlcNAc...) asparagine glycan is attached at asparagine 399. Disulfide bonds link cysteine 520-cysteine 538, cysteine 526-cysteine 561, cysteine 529-cysteine 545, and cysteine 541-cysteine 551. IPT/TIG domains lie at 563–655 (PTIY…FSYV), 657–739 (PIIT…FSYR), and 742–836 (PIVY…LIYV). A glycan (O-linked (Man) threonine) is linked at threonine 582. Residues asparagine 607 and asparagine 635 are each glycosylated (N-linked (GlcNAc...) asparagine). O-linked (Man) threonine glycosylation is found at threonine 676 and threonine 761. N-linked (GlcNAc...) asparagine glycosylation is found at asparagine 785, asparagine 879, and asparagine 930. Residues 933 to 955 (GLIAGVVSISIALLLLLGLFLWL) form a helical membrane-spanning segment. Residues 956–1381 (KKRKQIKDLG…QDNADGEVDT (426 aa)) are Cytoplasmic-facing. At serine 966 the chain carries Phosphoserine. Threonine 977 is subject to Phosphothreonine. Phosphoserine occurs at positions 990, 997, and 1000. Residue tyrosine 1003 is modified to Phosphotyrosine. The Protein kinase domain maps to 1078 to 1345 (VHFNEVIGRG…RISAIFSAFI (268 aa)). ATP-binding positions include 1084-1092 (IGRGHFGCV) and lysine 1110. Aspartate 1204 functions as the Proton acceptor in the catalytic mechanism. The tract at residues 1212–1381 (LDEKFTVKVA…QDNADGEVDT (170 aa)) is interaction with RANBP9. Phosphotyrosine is present on tyrosine 1230. A phosphotyrosine; by autocatalysis mark is found at tyrosine 1234 and tyrosine 1235. Threonine 1289 is modified (phosphothreonine). An interaction with MUC20 region spans residues 1320–1359 (WHPKAEMRPSFSELVSRISAIFSAFIGEHYVHVNATYVNV). Phosphotyrosine; by autocatalysis is present on residues tyrosine 1349 and tyrosine 1356. Tyrosine 1365 bears the Phosphotyrosine mark.

Belongs to the protein kinase superfamily. Tyr protein kinase family. As to quaternary structure, heterodimer made of an alpha chain (50 kDa) and a beta chain (145 kDa) which are disulfide linked. Binds PLXNB1. Interacts when phosphorylated with downstream effectors including STAT3, PIK3R1, SRC, PCLG1, GRB2 and GAB1. Interacts with SPSB1, SPSB2 and SPSB4. Interacts with INPP5D/SHIP1. When phosphorylated at Tyr-1356, interacts with INPPL1/SHIP2. Interacts with RANBP9 and RANBP10, as well as SPSB1, SPSB2, SPSB3 and SPSB4. SPSB1 binding occurs in the presence and in the absence of HGF, however HGF treatment has a positive effect on this interaction. Interacts with MUC20; prevents interaction with GRB2 and suppresses hepatocyte growth factor-induced cell proliferation. Interacts with GRB10. Interacts with PTPN1 and PTPN2. Interacts with tensin TNS3. Interacts (when phosphorylated) with tensin TNS4 (via SH2 domain); the interaction increases MET protein stability by inhibiting MET endocytosis and subsequent lysosomal degradation. Autophosphorylated in response to ligand binding on Tyr-1234 and Tyr-1235 in the kinase domain leading to further phosphorylation of Tyr-1349 and Tyr-1356 in the C-terminal multifunctional docking site. Dephosphorylated by PTPRJ at Tyr-1349 and Tyr-1365. Dephosphorylated by PTPN1 and PTPN2. Post-translationally, ubiquitinated. Ubiquitination by CBL regulates the receptor stability and activity through proteasomal degradation. In terms of processing, O-mannosylation of IPT/TIG domains by TMEM260 is required for protein maturation. O-mannosylated residues are composed of single mannose glycans that are not elongated or modified.

The protein localises to the membrane. The catalysed reaction is L-tyrosyl-[protein] + ATP = O-phospho-L-tyrosyl-[protein] + ADP + H(+). In its inactive state, the C-terminal tail interacts with the catalytic domain and inhibits the kinase activity. Upon ligand binding, the C-terminal tail is displaced and becomes phosphorylated, thus increasing the kinase activity. Its function is as follows. Receptor tyrosine kinase that transduces signals from the extracellular matrix into the cytoplasm by binding to hepatocyte growth factor/HGF ligand. Regulates many physiological processes including proliferation, scattering, morphogenesis and survival. Ligand binding at the cell surface induces autophosphorylation of MET on its intracellular domain that provides docking sites for downstream signaling molecules. Following activation by ligand, interacts with the PI3-kinase subunit PIK3R1, PLCG1, SRC, GRB2, STAT3 or the adapter GAB1. Recruitment of these downstream effectors by MET leads to the activation of several signaling cascades including the RAS-ERK, PI3 kinase-AKT, or PLCgamma-PKC. The RAS-ERK activation is associated with the morphogenetic effects while PI3K/AKT coordinates prosurvival effects. During embryonic development, MET signaling plays a role in gastrulation, development and migration of muscles and neuronal precursors, angiogenesis and kidney formation. In adults, participates in wound healing as well as organ regeneration and tissue remodeling. Also promotes differentiation and proliferation of hematopoietic cells. The polypeptide is Hepatocyte growth factor receptor (MET) (Ateles geoffroyi (Black-handed spider monkey)).